A 312-amino-acid polypeptide reads, in one-letter code: Glyoxylate/hydroxypyruvate reductase A (312 aa).

Residue arginine 227 is part of the active site. Histidine 275 serves as the catalytic Proton donor.

This sequence belongs to the D-isomer specific 2-hydroxyacid dehydrogenase family. GhrA subfamily.

It is found in the cytoplasm. It catalyses the reaction glycolate + NADP(+) = glyoxylate + NADPH + H(+). It carries out the reaction (R)-glycerate + NAD(+) = 3-hydroxypyruvate + NADH + H(+). The catalysed reaction is (R)-glycerate + NADP(+) = 3-hydroxypyruvate + NADPH + H(+). In terms of biological role, catalyzes the NADPH-dependent reduction of glyoxylate and hydroxypyruvate into glycolate and glycerate, respectively. This chain is Glyoxylate/hydroxypyruvate reductase A, found in Escherichia coli (strain SMS-3-5 / SECEC).